A 200-amino-acid polypeptide reads, in one-letter code: Ribonuclease T2 (200 aa).

A disulfide bridge connects residues Cys-17 and Cys-22. Residue His-32 is part of the active site. Cys-42 and Cys-89 are oxidised to a cystine. 2 N-linked (GlcNAc...) asparagine glycosylation sites follow: Asn-43 and Asn-73. Residues Glu-82 and His-86 contribute to the active site. N-linked (GlcNAc...) asparagine glycosylation occurs at Asn-116. Intrachain disulfides connect Cys-152–Cys-188 and Cys-170–Cys-180.

It belongs to the RNase T2 family.

It localises to the secreted. Its subcellular location is the lysosome lumen. The protein resides in the endoplasmic reticulum lumen. It is found in the mitochondrion intermembrane space. The catalysed reaction is a ribonucleotidyl-ribonucleotide-RNA + H2O = a 3'-end 3'-phospho-ribonucleotide-RNA + a 5'-end dephospho-ribonucleoside-RNA + H(+). It catalyses the reaction an adenylyl-uridine-RNA = a 3'-end 2',3'-cyclophospho-AMP-RNA + a 5'-end dephospho-uridine-RNA. The enzyme catalyses a guanylyl-uridine-RNA = a 3'-end 2',3'-cyclophospho-GMP-RNA + a 5'-end dephospho-uridine-RNA. Its activity is regulated as follows. Inhibited by Zn(2+) and Cu(2+). Its function is as follows. Ribonuclease that plays an essential role in innate immune response by recognizing and degrading RNAs from microbial pathogens that are subsequently sensed by TLR8. Cleaves preferentially single-stranded RNA molecules between purine and uridine residues, which critically contributes to the supply of catabolic uridine and the generation of purine-2',3'-cyclophosphate-terminated oligoribonucleotides. In turn, RNase T2 degradation products promote the RNA-dependent activation of TLR8. In plasmacytoid dendritic cells, it cooperates with PLD3 or PLD4 5'-&gt;3' exonucleases to process RNA fragments and release 2',3'-cyclic guanosine monophosphate (2',3'-cGMP), a potent stimulatory ligand for TLR7. Also plays a key role in degradation of mitochondrial RNA and processing of non-coding RNA imported from the cytosol into mitochondria. Participates as well in degradation of mitochondrion-associated cytosolic rRNAs. The chain is Ribonuclease T2 (RNASET2) from Sus scrofa (Pig).